Consider the following 638-residue polypeptide: Chaperone protein DnaK (638 aa).

Position 197 is a phosphothreonine; by autocatalysis (Thr197). Residues 598–638 are disordered; sequence QQSAPSGAAAGPDEGAPSGSGGTSGTRGGDDVIDAEFTETK. Residues 615-624 are compositionally biased toward gly residues; sequence SGSGGTSGTR. Positions 628-638 are enriched in acidic residues; that stretch reads DVIDAEFTETK.

It belongs to the heat shock protein 70 family.

In terms of biological role, acts as a chaperone. In Gloeobacter violaceus (strain ATCC 29082 / PCC 7421), this protein is Chaperone protein DnaK.